A 173-amino-acid chain; its full sequence is Protein FAM180A (173 aa).

Positions Met-1 to Ala-17 are cleaved as a signal peptide.

This sequence belongs to the FAM180 family.

The protein localises to the secreted. In Homo sapiens (Human), this protein is Protein FAM180A (FAM180A).